A 537-amino-acid polypeptide reads, in one-letter code: MATASGPAGIAMGSVGSLLERQDFSPEELRAALAGSRGSRQPDGLLRKGLGQREFFSYLHLPKKDGKTAKRAPRNEPDYTTLYYREHPRAGDFSKTSLPERGRFDKCRIRPSVFKPPVSTGKGFLSMQSLAAHKGQKLWRSNGSLHTLACHPPLSPGPRASQARAQLLHALSLDEGGPEPSLSDSSSGGSFGRSPGTGPSPFSSSLGHINHLGGSLDRASRSPKESGPLAVLSCLPEPPPPYEFSCPTTEEVAVLPDTCEELKRDLGDQDVSNPFTQVLEERQRLWLSELKRLYVDRLHEVAQKAERSERNLQLQLFMAQQEQRRLRKELRAQQGLAPEPRTSGPPMEADPNARPEEEARWEVCQKTAEISLLKQQLREAQAELAQKLAEIFSLKTQLRGSRAQAQAQDAELARLREAVRSLQEQAPREEAPGSCETDDCKSRGLLGEAGGNEAREGAEQLRAELLQERLRGQEQALRFEQERQTWQEEKERVLRYQREIQGSYMDMYRRNQALEQELRVLREPPTSWSPRLESSKI.

At Ser172 the chain carries Phosphoserine. Disordered regions lie at residues Leu173–Cys234, Arg327–Ala359, and Leu422–Glu456. Over residues Pro178–Gly207 the composition is skewed to low complexity. Residues Val295–Glu523 are a coiled coil.

Belongs to the N4BP3 family. As to quaternary structure, binds NEDD4. Interacts with 14-3-3 proteins. Interacts with MAVS.

The protein localises to the cytoplasmic vesicle. It is found in the cell projection. The protein resides in the axon. It localises to the dendrite. Plays a positive role in the antiviral innate immune signaling pathway. Mechanistically, interacts with MAVS and functions as a positive regulator to promote 'Lys-63'-linked polyubiquitination of MAVS and thus strengthens the interaction between MAVS and TRAF2. Also plays a role in axon and dendrite arborization during cranial nerve development. May also be important for neural crest migration and early development of other anterior structures including eye, brain and cranial cartilage. This chain is Nedd4 binding protein 3, found in Rattus norvegicus (Rat).